The sequence spans 530 residues: Hyccin 2 (530 aa).

Thr-30 and Thr-306 each carry phosphothreonine. 2 positions are modified to phosphoserine: Ser-321 and Ser-341. The tract at residues 328–410 (RREGAEGVNG…DSVVRKQYVQ (83 aa)) is disordered. Polar residues predominate over residues 353–373 (SGASLSSQPIGTKPSSSSQRG). 4 positions are modified to phosphoserine: Ser-430, Ser-442, Ser-444, and Ser-491. Residues 498-530 (GQAGEGKELLSPGAPLTKQSRSPSFNMQLISQV) are disordered. Residues 514–530 (TKQSRSPSFNMQLISQV) show a composition bias toward polar residues.

This sequence belongs to the Hyccin family. Component of a phosphatidylinositol 4-kinase (PI4K) complex, composed of PI4KA, EFR3 (EFR3A or EFR3B), TTC7 (TTC7A or TTC7B) and HYCC (HYCC1 or HYCC2).

The protein resides in the cytoplasm. The protein localises to the cytosol. It localises to the cell membrane. Functionally, component of a complex required to localize phosphatidylinositol 4-kinase (PI4K) to the plasma membrane. The polypeptide is Hyccin 2 (HYCC2) (Pongo abelii (Sumatran orangutan)).